A 203-amino-acid chain; its full sequence is Thymidylate kinase (203 aa).

14-21 contacts ATP; it reads GGEGIGKS.

The protein belongs to the thymidylate kinase family.

It catalyses the reaction dTMP + ATP = dTDP + ADP. In terms of biological role, phosphorylation of dTMP to form dTDP in both de novo and salvage pathways of dTTP synthesis. In Rickettsia conorii (strain ATCC VR-613 / Malish 7), this protein is Thymidylate kinase.